A 355-amino-acid chain; its full sequence is Probable butyrate kinase (355 aa).

The protein belongs to the acetokinase family.

It localises to the cytoplasm. It carries out the reaction butanoate + ATP = butanoyl phosphate + ADP. This Clostridium botulinum (strain Eklund 17B / Type B) protein is Probable butyrate kinase.